A 585-amino-acid chain; its full sequence is Arginine--tRNA ligase (585 aa).

Positions 131–141 (ANPTGPMHVGH) match the 'HIGH' region motif.

This sequence belongs to the class-I aminoacyl-tRNA synthetase family. As to quaternary structure, monomer.

It is found in the cytoplasm. The enzyme catalyses tRNA(Arg) + L-arginine + ATP = L-arginyl-tRNA(Arg) + AMP + diphosphate. The chain is Arginine--tRNA ligase from Rhizobium leguminosarum bv. trifolii (strain WSM2304).